Here is a 1007-residue protein sequence, read N- to C-terminus: Inversin-A (1007 aa).

ANK repeat units follow at residues S9–Q39, L43–H72, S76–H105, R109–A140, R144–I173, E177–L209, E216–P246, L250–I279, Q284–E313, E317–V346, Y352–A381, M385–L414, D418–A447, E451–I480, N484–Q513, and E519–A549. Positions R486–N494 match the D-box 1 motif. The IQ 1 domain maps to Q551–K580. 2 stretches are compositionally biased toward basic and acidic residues: residues R585–Q599 and G608–E652. 2 disordered regions span residues R585–S837 and S868–K893. The segment covering I684–M701 has biased composition (polar residues). Residues S702–S712 show a composition bias toward low complexity. Residues N727–S745 are compositionally biased toward polar residues. Residues H751 to K771 show a composition bias toward basic and acidic residues. Residues G772–L784 are compositionally biased toward basic residues. The segment covering K870–K893 has biased composition (polar residues). The D-box 2 signature appears at R964 to K972. Residues K971 to R1000 enclose the IQ 2 domain.

In terms of assembly, interacts with apc2. Binds calmodulin.

It is found in the cytoplasm. Its subcellular location is the cytoskeleton. Functionally, required for normal renal development and establishment of left-right axis. Probably acts as a molecular switch between different Wnt signaling pathways. Inhibits the canonical Wnt pathway by targeting cytoplasmic disheveled for degradation by the ubiquitin-proteasome. This suggests that it is required in renal development to oppose the repression of terminal differentiation of tubular epithelial cells by Wnt signaling. Plays a central role in convergent extension movements in gastrulating embryos, a processus regulated by Wnt signaling. The sequence is that of Inversin-A (invs-a) from Xenopus laevis (African clawed frog).